Consider the following 54-residue polypeptide: Ovomucoid (54 aa).

The Kazal-like domain occupies 4 to 54 (VDCSEYPKPVCSLEYMPLCGSDSQTYSNECNFCNAVVDSNGTLTLSHFGKC). Cystine bridges form between cysteine 6/cysteine 36, cysteine 14/cysteine 33, and cysteine 22/cysteine 54. A glycan (N-linked (GlcNAc...) asparagine) is linked at asparagine 43.

It is found in the secreted. This is Ovomucoid from Caracara plancus (Southern caracara).